Consider the following 244-residue polypeptide: Ferredoxin--NADP reductase B (244 aa).

The FAD-binding FR-type domain occupies 4–106 (AEPFEARLVA…VGPHGLFTRD (103 aa)). Residues 55-58 (RAYS) and T120 each bind FAD.

This sequence belongs to the ferredoxin--NADP reductase type 1 family. The cofactor is FAD.

It catalyses the reaction 2 reduced [4Fe-4S]-[ferredoxin] + NADP(+) + H(+) = 2 oxidized [4Fe-4S]-[ferredoxin] + NADPH. Functionally, transports electrons between NADPH and ferredoxin. Can transfer electrons to ferredoxins Fdx2 and Fdx8. Prefers NADPH to NADH. This is Ferredoxin--NADP reductase B from Sorangium cellulosum (strain So ce56) (Polyangium cellulosum (strain So ce56)).